Reading from the N-terminus, the 1295-residue chain is Nonribosomal peptide synthetase resC (1295 aa).

Residues 1-24 (MDLTTTSHARVDSGGVPFTSSLND) form a disordered region. Residues 221–624 (KDVVDASPQA…EGRKDTQIKL (404 aa)) are adenylation. The 78-residue stretch at 759–836 (ESANPAEENL…DQANLLRPLV (78 aa)) folds into the Carrier domain. An O-(pantetheine 4'-phosphoryl)serine modification is found at serine 796. Positions 873 to 1284 (EDVYPCTPYQ…DEYSQTLHEL (412 aa)) are condensation.

This sequence belongs to the NRP synthetase family. Requires pantetheine 4'-phosphate as cofactor.

The enzyme catalyses restrictinol + glycine + H(+) = restricticin + H2O. It participates in antifungal biosynthesis. Functionally, nonribosomal peptide synthetase; part of the gene cluster that mediates the biosynthesis of the tetrahydropyranyl antifungal agent restricticin that acts as an inhibitor of CYP51 and blocks the ergosterol biosynthesis. Within the pathway, resC catalyzes the C3 esterification of restrictinol with glycine to yield restricticin. ResC represents an example of the emerging class of single-module NRPS-like enzymes that perform esterification reactions. The highly reducing polyketide synthase resH, the short chain dehydrogenase resG, the cyclase resF, the FAD-dependent monooxygenase resA and the enoylreductase resD are required to generate the first stable intermediate desmethylrestrictinol. ResH with resD biosynthesize the first polyketide chain intermediate that is reduced by resG, followed by epoxidation by resA before 6-endo cyclization via epoxide opening by resF leads to desmethylrestrictinol. The methyltransferase resE then catalyzes the C4 O-methylation of desmethylrestrictinol to produce restrictinol, and the nonribosomal peptide synthetase resC catalyzes the C3 esterification of restrictinol with glycine that leads to restricticin. This Aspergillus sclerotiorum protein is Nonribosomal peptide synthetase resC.